A 377-amino-acid chain; its full sequence is MAPVSNETFLPTEAWGEATLRPSFVRDEDERPKVAHDRFSDAVPLISLHGIDGARRAQIRDRVAAACEDWGIFQVIDHGVDADLIADMTRLAREFFALPAEDKLRYDMSGGKKGGFIVSSHLQGEAVQDWREIVTYFSYPVKARDYGRWPEKPAGWCAVVERYSERLMGLSCNLMGVLSEAMGLETEALAKACVDMDQKVVVNFYPRCPQPDLTLGLKRHTDPGTITLLLQDLVGGLQATRDGGKNWITVQPISGAFVVNLGDHGHFMSNGRFKNADHQAVVNGESSRLSIATFQNPAPDARVWPLAVREGEEPILEEPITFTEMYRRKMERDLDLAKRKKQAKDQLMQQQLQLQQQQAVAAAPMPTATKPLNEILA.

A Fe2OG dioxygenase domain is found at 193 to 297; the sequence is CVDMDQKVVV…RLSIATFQNP (105 aa). Residues His-220, Asp-222, and His-278 each contribute to the Fe cation site. Residue Arg-288 participates in 2-oxoglutarate binding.

It belongs to the iron/ascorbate-dependent oxidoreductase family. Requires Fe(2+) as cofactor. L-ascorbate is required as a cofactor.

The enzyme catalyses a (2S)-flavan-4-one + 2-oxoglutarate + O2 = a (2R,3R)-dihydroflavonol + succinate + CO2. The protein operates within secondary metabolite biosynthesis; flavonoid biosynthesis. Its function is as follows. Catalyzes the 3-beta-hydroxylation of 2S-flavanones to 2R,3R-dihydroflavonols which are intermediates in the biosynthesis of flavonols, anthocyanidins, catechins and proanthocyanidins in plants. The sequence is that of Naringenin,2-oxoglutarate 3-dioxygenase from Hordeum vulgare (Barley).